Here is a 273-residue protein sequence, read N- to C-terminus: Large ribosomal subunit protein uL2 (273 aa).

Residues 213–261 (WLGKRPQSRGVAMNPVDHPHGGGEGKSSGGRHPVTPWGVPTKGYKTRVN) are disordered.

The protein belongs to the universal ribosomal protein uL2 family. Part of the 50S ribosomal subunit. Forms a bridge to the 30S subunit in the 70S ribosome.

Its function is as follows. One of the primary rRNA binding proteins. Required for association of the 30S and 50S subunits to form the 70S ribosome, for tRNA binding and peptide bond formation. It has been suggested to have peptidyltransferase activity; this is somewhat controversial. Makes several contacts with the 16S rRNA in the 70S ribosome. This is Large ribosomal subunit protein uL2 from Syntrophotalea carbinolica (strain DSM 2380 / NBRC 103641 / GraBd1) (Pelobacter carbinolicus).